Consider the following 283-residue polypeptide: Thymidylate synthase (283 aa).

Arg-22 is a binding site for dUMP. Cys-160 (nucleophile) is an active-site residue. DUMP-binding positions include 180–183 (RSCD), Asn-191, and 221–223 (HIY). A (6R)-5,10-methylene-5,6,7,8-tetrahydrofolate-binding site is contributed by Asp-183. (6R)-5,10-methylene-5,6,7,8-tetrahydrofolate is bound at residue Ala-282.

It belongs to the thymidylate synthase family. Bacterial-type ThyA subfamily. As to quaternary structure, homodimer.

Its subcellular location is the cytoplasm. The enzyme catalyses dUMP + (6R)-5,10-methylene-5,6,7,8-tetrahydrofolate = 7,8-dihydrofolate + dTMP. It functions in the pathway pyrimidine metabolism; dTTP biosynthesis. Catalyzes the reductive methylation of 2'-deoxyuridine-5'-monophosphate (dUMP) to 2'-deoxythymidine-5'-monophosphate (dTMP) while utilizing 5,10-methylenetetrahydrofolate (mTHF) as the methyl donor and reductant in the reaction, yielding dihydrofolate (DHF) as a by-product. This enzymatic reaction provides an intracellular de novo source of dTMP, an essential precursor for DNA biosynthesis. The sequence is that of Thymidylate synthase from Shewanella frigidimarina (strain NCIMB 400).